A 147-amino-acid polypeptide reads, in one-letter code: Globin (147 aa).

Ser2 is modified (N-acetylserine). The 146-residue stretch at 2 to 147 folds into the Globin domain; the sequence is SLSAAEADLA…IIDALKAAGK (146 aa). Heme b is bound at residue His96.

This sequence belongs to the globin family. Monomer.

In Aplysia limacina (Sea hare), this protein is Globin.